Here is a 569-residue protein sequence, read N- to C-terminus: MRASQWFLVTQKETPNDAEIASHQLMLRSGMIRKLGSGLYTWMPLGLRVLRKVENIVREEMNKTHAMELLMPSVQPAELWQETGRWETFGGQLLTMKDSNQREYCFGPTHEEVITDIMRNELQSYKQLPVNFYQIQTKFRDEIRPRFGVMRAREFIMKDAYSFHLSLESLQETYKDMYQAYCRIFDRMGLKYRAVEADTGAIGGSASHEFQVLAESGEDLIFYSDASDYAANIEQATSLKPPKANQACNETITLVDTPNQKTIDEVASFLGIASNQTIKTLIVKGKEHPMVALVLRGDDELNEVKATKHPLVHSPLSFIDEELILKTLKTPLGSIGPIQLNIPVIVDHHALAMPSFVCGANQADKHFINAAWERDAKYDDAYDLRNVKEGDQSPDGRGTLHCCRGIEVGHVFQLGDKYAKAMNASVINEQGQLQTMIMGCYGLGITRVVAAAIEQHHDEHGIIWPQALAPFQVNIIPLNGARSQTVKEQAESLYQQLKSHGIDVLLDDRNERAGVLFADNDLIGIPHRLVVSERNLEQGCIEYKSRTSSETQLINLDKVVNFIIELINK.

The protein belongs to the class-II aminoacyl-tRNA synthetase family. ProS type 1 subfamily. Homodimer.

It is found in the cytoplasm. The catalysed reaction is tRNA(Pro) + L-proline + ATP = L-prolyl-tRNA(Pro) + AMP + diphosphate. Functionally, catalyzes the attachment of proline to tRNA(Pro) in a two-step reaction: proline is first activated by ATP to form Pro-AMP and then transferred to the acceptor end of tRNA(Pro). As ProRS can inadvertently accommodate and process non-cognate amino acids such as alanine and cysteine, to avoid such errors it has two additional distinct editing activities against alanine. One activity is designated as 'pretransfer' editing and involves the tRNA(Pro)-independent hydrolysis of activated Ala-AMP. The other activity is designated 'posttransfer' editing and involves deacylation of mischarged Ala-tRNA(Pro). The misacylated Cys-tRNA(Pro) is not edited by ProRS. The sequence is that of Proline--tRNA ligase from Legionella pneumophila (strain Paris).